Consider the following 206-residue polypeptide: Ribosomal RNA large subunit methyltransferase E (206 aa).

The S-adenosyl-L-methionine site is built by Gly61, Trp63, Asp81, Asp97, and Asp122. The Proton acceptor role is filled by Lys162.

It belongs to the class I-like SAM-binding methyltransferase superfamily. RNA methyltransferase RlmE family.

Its subcellular location is the cytoplasm. It carries out the reaction uridine(2552) in 23S rRNA + S-adenosyl-L-methionine = 2'-O-methyluridine(2552) in 23S rRNA + S-adenosyl-L-homocysteine + H(+). In terms of biological role, specifically methylates the uridine in position 2552 of 23S rRNA at the 2'-O position of the ribose in the fully assembled 50S ribosomal subunit. The protein is Ribosomal RNA large subunit methyltransferase E of Neisseria gonorrhoeae (strain ATCC 700825 / FA 1090).